The sequence spans 337 residues: Phospholipase A1 1 (337 aa).

A signal peptide spans 1 to 21 (MNFKYSILFICFVKVLDNCYA). Positions 22–35 (ADDLTTLRNGTLDR) are excised as a propeptide. C41 and C124 form a disulfide bridge. The Nucleophile role is filled by S174. D202 functions as the Charge relay system in the catalytic mechanism. 2 cysteine pairs are disulfide-bonded: C213-C218 and C256-C261. Catalysis depends on H263, which acts as the Charge relay system. Cystine bridges form between C278/C305, C279/C330, and C298/C303.

It belongs to the AB hydrolase superfamily. Lipase family. As to expression, expressed by the venom gland.

Its subcellular location is the secreted. The enzyme catalyses a 1,2-diacyl-sn-glycero-3-phosphocholine + H2O = a 2-acyl-sn-glycero-3-phosphocholine + a fatty acid + H(+). Functionally, catalyzes the hydrolysis of phosphatidylcholine with phospholipase A1 activity. May act as an allergen and induce hemolytic activity. The protein is Phospholipase A1 1 of Polistes dominula (European paper wasp).